Consider the following 611-residue polypeptide: mRNA export factor GLE1 (611 aa).

Disordered regions lie at residues 69–94 (SEDE…SQIC) and 220–243 (KIRS…EKIR). Residues 71–89 (DEMESDEGEESDDEEEEED) show a composition bias toward acidic residues.

It belongs to the GLE1 family. As to quaternary structure, part of the nuclear pore complex (NPC). The NPC has an eight-fold symmetrical structure comprising a central transport channel and two rings, the cytoplasmic and nuclear rings, to which eight filaments are attached. The cytoplasmic filaments have loose ends, while the nuclear filaments are joined in a distal ring, forming a nuclear basket. NPCs are highly dynamic in configuration and composition, and can be devided in 3 subcomplexes, the NUP62 subcomplex, the NUP107-160 subcomplex and the NUP93 subcomplex, containing approximately 30 different nucleoporin proteins.

The protein resides in the nucleus envelope. It localises to the nucleus. Its subcellular location is the nuclear pore complex. Its function is as follows. Required for seed viability. The chain is mRNA export factor GLE1 from Arabidopsis thaliana (Mouse-ear cress).